Here is a 452-residue protein sequence, read N- to C-terminus: Probable mannose-6-phosphate isomerase (452 aa).

Glutamine 141, histidine 143, glutamate 168, and histidine 295 together coordinate Zn(2+). The active site involves arginine 314.

The protein belongs to the mannose-6-phosphate isomerase type 1 family. Zn(2+) serves as cofactor.

It is found in the cytoplasm. It carries out the reaction D-mannose 6-phosphate = D-fructose 6-phosphate. Its pathway is nucleotide-sugar biosynthesis; GDP-alpha-D-mannose biosynthesis; alpha-D-mannose 1-phosphate from D-fructose 6-phosphate: step 1/2. Its function is as follows. Involved in the synthesis of the GDP-mannose and dolichol-phosphate-mannose required for a number of critical mannosyl transfer reactions. This Dictyostelium discoideum (Social amoeba) protein is Probable mannose-6-phosphate isomerase (mpi).